The chain runs to 284 residues: Formamidopyrimidine-DNA glycosylase (284 aa).

Pro2 (schiff-base intermediate with DNA) is an active-site residue. The active-site Proton donor is Glu3. Lys58 functions as the Proton donor; for beta-elimination activity in the catalytic mechanism. DNA is bound by residues His101, Arg120, and Arg163. The FPG-type zinc-finger motif lies at 248 to 284 (RVYDRENAPCVTAGCPDVVRRVVQSGRSSFYCPSCQR). The active-site Proton donor; for delta-elimination activity is the Arg274.

Belongs to the FPG family. As to quaternary structure, monomer. It depends on Zn(2+) as a cofactor.

It catalyses the reaction Hydrolysis of DNA containing ring-opened 7-methylguanine residues, releasing 2,6-diamino-4-hydroxy-5-(N-methyl)formamidopyrimidine.. It carries out the reaction 2'-deoxyribonucleotide-(2'-deoxyribose 5'-phosphate)-2'-deoxyribonucleotide-DNA = a 3'-end 2'-deoxyribonucleotide-(2,3-dehydro-2,3-deoxyribose 5'-phosphate)-DNA + a 5'-end 5'-phospho-2'-deoxyribonucleoside-DNA + H(+). Functionally, involved in base excision repair of DNA damaged by oxidation or by mutagenic agents. Acts as a DNA glycosylase that recognizes and removes damaged bases. Has a preference for oxidized purines, such as 7,8-dihydro-8-oxoguanine (8-oxoG). Has AP (apurinic/apyrimidinic) lyase activity and introduces nicks in the DNA strand. Cleaves the DNA backbone by beta-delta elimination to generate a single-strand break at the site of the removed base with both 3'- and 5'-phosphates. This chain is Formamidopyrimidine-DNA glycosylase, found in Dinoroseobacter shibae (strain DSM 16493 / NCIMB 14021 / DFL 12).